A 449-amino-acid polypeptide reads, in one-letter code: Exodeoxyribonuclease 7 large subunit (449 aa).

This sequence belongs to the XseA family. In terms of assembly, heterooligomer composed of large and small subunits.

It localises to the cytoplasm. The catalysed reaction is Exonucleolytic cleavage in either 5'- to 3'- or 3'- to 5'-direction to yield nucleoside 5'-phosphates.. In terms of biological role, bidirectionally degrades single-stranded DNA into large acid-insoluble oligonucleotides, which are then degraded further into small acid-soluble oligonucleotides. The polypeptide is Exodeoxyribonuclease 7 large subunit (Salmonella typhi).